Consider the following 216-residue polypeptide: Uracil-DNA glycosylase (216 aa).

Residue Asp-59 is the Proton acceptor of the active site.

Belongs to the uracil-DNA glycosylase (UDG) superfamily. UNG family.

It is found in the cytoplasm. It catalyses the reaction Hydrolyzes single-stranded DNA or mismatched double-stranded DNA and polynucleotides, releasing free uracil.. In terms of biological role, excises uracil residues from the DNA which can arise as a result of misincorporation of dUMP residues by DNA polymerase or due to deamination of cytosine. This Staphylococcus epidermidis (strain ATCC 12228 / FDA PCI 1200) protein is Uracil-DNA glycosylase.